Reading from the N-terminus, the 213-residue chain is MTDQSHQCVIIGISGASASGKSLISSTLYRELRDQVGDQHIGVISEDSYYKDQSHLTMEERVKTNYDHPSSMDHSLLLKHLQMLKAGQAIEVPQYSYVEHTRKQETVHIELKKVIILEGILLLTDARLRDEMNFSIFVDTPLDICLLRRMRRDVNERGRSMDSVMEQYQKTVRPMFLQFIEPSKQYADIIVPRGGKNRIAIDILKAKISQFFE.

Position 15–22 (15–22 (GASASGKS)) interacts with ATP.

This sequence belongs to the uridine kinase family.

The protein localises to the cytoplasm. The catalysed reaction is uridine + ATP = UMP + ADP + H(+). The enzyme catalyses cytidine + ATP = CMP + ADP + H(+). Its pathway is pyrimidine metabolism; CTP biosynthesis via salvage pathway; CTP from cytidine: step 1/3. It functions in the pathway pyrimidine metabolism; UMP biosynthesis via salvage pathway; UMP from uridine: step 1/1. In Pectobacterium carotovorum subsp. carotovorum (strain PC1), this protein is Uridine kinase.